The primary structure comprises 317 residues: Probable transcription factor At5g61620 (317 aa).

The segment at 12 to 25 (CSHCGHNGHNARTC) adopts a CCHC-type zinc-finger fold. A disordered region spans residues 77–111 (DPIAAVDDTGYHSDGQIHSKKGKTAHEKKKGKPWT). Residues 94–108 (HSKKGKTAHEKKKGK) are compositionally biased toward basic residues. In terms of domain architecture, HTH myb-type spans 102 to 158 (HEKKKGKPWTEEEHRNFLIGLNKLGKGDWRGIAKSFVSTRTPTQVASHAQKYFIRLN). Residues 130–154 (WRGIAKSFVSTRTPTQVASHAQKYF) constitute a DNA-binding region (H-T-H motif). Residues 173–206 (SLEDQKEKERNSQDASTKTPPKQPITGIQQPVVQ) are disordered. The segment covering 175-184 (EDQKEKERNS) has biased composition (basic and acidic residues). The span at 185-206 (QDASTKTPPKQPITGIQQPVVQ) shows a compositional bias: polar residues.

Its subcellular location is the nucleus. Functionally, probable transcription factor involved in somatic embryogenesis. Acts as a positive regulator of BHLH109. The sequence is that of Probable transcription factor At5g61620 from Arabidopsis thaliana (Mouse-ear cress).